The following is a 506-amino-acid chain: Sodium transporter HKT1 (506 aa).

Over 1-19 the chain is Cytoplasmic; the sequence is MDRVVAKIAKIRSQLTKLR. Residues 20 to 40 traverse the membrane as a helical segment; sequence SLFFLYFIYFLFFSFLGFLAL. The Extracellular portion of the chain corresponds to 41–81; it reads KITKPRTTSRPHDFDLFFTSVSAITVSSMSTVDMEVFSNTQ. The chain crosses the membrane as a helical span at residues 82–102; the sequence is LIFLTILMFLGGEIFTSFLNL. The Cytoplasmic portion of the chain corresponds to 103-159; it reads YVSYFTKFVFPHNKIRHILGSYNSDSSIEDRCDVETVTDYREGLIKIDERASKCLYS. The chain crosses the membrane as a helical span at residues 160–180; that stretch reads VVLSYHLVTNLVGSVLLLVYV. At 181–232 the chain is on the extracellular side; it reads NFVKTARDVLSSKEISPLTFSVFTTVSTFANCGFVPTNENMIIFRKNSGLIW. Residues 233-253 form a helical membrane-spanning segment; the sequence is LLIPQVLMGNTLFPCFLVLLI. The Cytoplasmic segment spans residues 254–286; it reads WGLYKITKRDEYGYILKNHNKMGYSHLLSVRLC. Residues 287-307 form a helical membrane-spanning segment; sequence VLLGVTVLGFLIIQLLFFCAF. Residues 308–348 are Extracellular-facing; the sequence is EWTSESLEGMSSYEKLVGSLFQVVNSRHTGETIVDLSTLSP. Residues 349–369 form a helical membrane-spanning segment; that stretch reads AILVLFILMMYLPPYTLFMPL. Residues 370–392 lie on the Cytoplasmic side of the membrane; sequence TEQKTIEKEGGDDDSENGKKVKK. A helical membrane pass occupies residues 393 to 413; that stretch reads SGLIVSQLSFLTICIFLISIT. Topologically, residues 414–465 are extracellular; sequence ERQNLQRDPINFNVLNITLEVISAYGNVGFTTGYSCERRVDISDGGCKDASY. Residue N429 is glycosylated (N-linked (GlcNAc...) asparagine). The chain crosses the membrane as a helical span at residues 466 to 486; sequence GFAGRWSPMGKFVLIIVMFYG. The Cytoplasmic portion of the chain corresponds to 487 to 506; that stretch reads RFKQFTAKSGRAWILYPSSS.

It belongs to the TrkH potassium transport family. HKT (TC 2.A.38.3) subfamily. Post-translationally, N-glycosylated. Not essential for functional expression and membrane targeting. Highly expressed in roots. Expressed in flowers, leaves and stems. Expressed in the vascular tissues of every organs. In roots, leaves and flower peduncles, it is only expressed in the phloem tissues. Not expressed in root peripheral cells.

It localises to the cell membrane. It catalyses the reaction Na(+)(in) = Na(+)(out). Its function is as follows. Sodium transporter protein, which plays a central role in plant tolerance to salt. Upon prolongated exposure to high concentrations, Na(+) translocates from the roots to the transpiring leaves where it can increase to toxic level. Involved in Na(+) recirculation from shoots to roots, probably by mediating Na(+) loading into the phloem sap in shoots and unloading in roots, thereby removing large amounts of Na(+) from the shoot. Does not transport K(+) but regulates K(+) nutrient status via its ability to facilitate Na(+) homeostasis. Probably not involved in root uptake of Na(+). This is Sodium transporter HKT1 (HKT1) from Arabidopsis thaliana (Mouse-ear cress).